The chain runs to 370 residues: Chaperone protein DnaJ (370 aa).

Residues 6–70 (DYYEVLGVQR…EKRSMYDRFG (65 aa)) enclose the J domain. The CR-type zinc-finger motif lies at 128 to 208 (GVEKTIEYRR…CRGEGRIRQT (81 aa)). The Zn(2+) site is built by cysteine 141, cysteine 144, cysteine 158, cysteine 161, cysteine 182, cysteine 185, cysteine 196, and cysteine 199. CXXCXGXG motif repeat units lie at residues 141–148 (CPACRGSG), 158–165 (CPKCGGLG), 182–189 (CDMCRGEG), and 196–203 (CRECRGEG).

The protein belongs to the DnaJ family. As to quaternary structure, homodimer. It depends on Zn(2+) as a cofactor.

It is found in the cytoplasm. Its function is as follows. Participates actively in the response to hyperosmotic and heat shock by preventing the aggregation of stress-denatured proteins and by disaggregating proteins, also in an autonomous, DnaK-independent fashion. Unfolded proteins bind initially to DnaJ; upon interaction with the DnaJ-bound protein, DnaK hydrolyzes its bound ATP, resulting in the formation of a stable complex. GrpE releases ADP from DnaK; ATP binding to DnaK triggers the release of the substrate protein, thus completing the reaction cycle. Several rounds of ATP-dependent interactions between DnaJ, DnaK and GrpE are required for fully efficient folding. Also involved, together with DnaK and GrpE, in the DNA replication of plasmids through activation of initiation proteins. The sequence is that of Chaperone protein DnaJ from Roseiflexus castenholzii (strain DSM 13941 / HLO8).